Here is a 200-residue protein sequence, read N- to C-terminus: LexA repressor (200 aa).

A DNA-binding region (H-T-H motif) is located at residues 28 to 48 (RAEIARILGFKSANAAEEHIK). Active-site for autocatalytic cleavage activity residues include Ser-118 and Lys-155.

It belongs to the peptidase S24 family. As to quaternary structure, homodimer.

It carries out the reaction Hydrolysis of Ala-|-Gly bond in repressor LexA.. In terms of biological role, represses a number of genes involved in the response to DNA damage (SOS response), including recA and lexA. In the presence of single-stranded DNA, RecA interacts with LexA causing an autocatalytic cleavage which disrupts the DNA-binding part of LexA, leading to derepression of the SOS regulon and eventually DNA repair. The polypeptide is LexA repressor (Cellvibrio japonicus (strain Ueda107) (Pseudomonas fluorescens subsp. cellulosa)).